Consider the following 320-residue polypeptide: Acetyl-coenzyme A carboxylase carboxyl transferase subunit alpha (320 aa).

In terms of domain architecture, CoA carboxyltransferase C-terminal spans 42–295; sequence IEEKAVQALN…GDAIAAAFAE (254 aa).

It belongs to the AccA family. In terms of assembly, acetyl-CoA carboxylase is a heterohexamer composed of biotin carboxyl carrier protein (AccB), biotin carboxylase (AccC) and two subunits each of ACCase subunit alpha (AccA) and ACCase subunit beta (AccD).

The protein localises to the cytoplasm. The enzyme catalyses N(6)-carboxybiotinyl-L-lysyl-[protein] + acetyl-CoA = N(6)-biotinyl-L-lysyl-[protein] + malonyl-CoA. It participates in lipid metabolism; malonyl-CoA biosynthesis; malonyl-CoA from acetyl-CoA: step 1/1. Component of the acetyl coenzyme A carboxylase (ACC) complex. First, biotin carboxylase catalyzes the carboxylation of biotin on its carrier protein (BCCP) and then the CO(2) group is transferred by the carboxyltransferase to acetyl-CoA to form malonyl-CoA. This is Acetyl-coenzyme A carboxylase carboxyl transferase subunit alpha from Rhodopseudomonas palustris (strain HaA2).